We begin with the raw amino-acid sequence, 206 residues long: Venom allergen 5 (206 aa).

Cystine bridges form between cysteine 5/cysteine 18, cysteine 9/cysteine 103, cysteine 28/cysteine 96, and cysteine 172/cysteine 189. The 145-residue stretch at 47 to 191 (LKVHNDFRQK…WYTHYLVCNY (145 aa)) folds into the SCP domain.

This sequence belongs to the CRISP family. Venom allergen 5-like subfamily. As to expression, expressed by the venom gland.

The protein resides in the secreted. The protein is Venom allergen 5 of Vespula vidua (Ground hornet).